A 502-amino-acid chain; its full sequence is MSIRAEEISALIKQQIENYESQIQVSDVGTVIQVGDGIARAHGLDNVMSGELVEFANGVMGMALNLEENNVGIVILGPYTGIKEGDEVRRTGRIMEVPVGEALIGRVVNPLGQPVDGLGPVETTETRPIESPAPGVMDRRSVHEPLQTGIKAIDALVPIGRGQRELIIGDRQTGKTSVAIDTIINQKDQNMICIYVAIGQKESTVRTVVETLRKHGALDYTIVVTASASQPAPLLFLAPYAGVAMGEYFMYKGQHVLVVYDDLSKQAAAYRELSLLLRRPPGREAYPGDIFYLHSRLLERAAKLSDAKGGGSLTALPFVETQAGDISAYIPTNVISITDGQIFLQSDLFFSGVRPAINAGLSVSRVGGAAQIKAMKKVAGTLRLDLAAYRELEAFAQFGSDLDKATQAKLARGARTVEVLKQDLHQPIPVEKQVLIIYALTRGFLDDIPVEDVRRFEKEFYLWLDQNGQHLLEHIRTTKDLPNEDDLNKAIEAFKKTFVVSQ.

Positions 115 to 137 (VDGLGPVETTETRPIESPAPGVM) are disordered. 169-176 (GDRQTGKT) contributes to the ATP binding site.

It belongs to the ATPase alpha/beta chains family. In terms of assembly, F-type ATPases have 2 components, CF(1) - the catalytic core - and CF(0) - the membrane proton channel. CF(1) has five subunits: alpha(3), beta(3), gamma(1), delta(1), epsilon(1). CF(0) has three main subunits: a(1), b(2) and c(9-12). The alpha and beta chains form an alternating ring which encloses part of the gamma chain. CF(1) is attached to CF(0) by a central stalk formed by the gamma and epsilon chains, while a peripheral stalk is formed by the delta and b chains.

It localises to the cell membrane. The enzyme catalyses ATP + H2O + 4 H(+)(in) = ADP + phosphate + 5 H(+)(out). Produces ATP from ADP in the presence of a proton gradient across the membrane. The alpha chain is a regulatory subunit. This chain is ATP synthase subunit alpha, found in Geobacillus kaustophilus (strain HTA426).